Here is a 293-residue protein sequence, read N- to C-terminus: 2-pyrone-4,6-dicarboxylate hydrolase (293 aa).

Residues 1 to 20 form a disordered region; sequence MTNDERILSWNETPSKPRYT. Substrate contacts are provided by residues 29-31, Tyr-47, Ser-75, Arg-122, Arg-128, Tyr-154, and His-178; that span reads HCH. The active-site Proton acceptor is Asp-246. Asn-251 is a binding site for substrate.

The protein belongs to the metallo-dependent hydrolases superfamily. PDC hydrolase family. Monomer.

The catalysed reaction is 2-oxo-2H-pyran-4,6-dicarboxylate + H2O = (1E)-4-oxobut-1-ene-1,2,4-tricarboxylate + H(+). It functions in the pathway secondary metabolite metabolism; lignin degradation. Its activity is regulated as follows. Strongly inhibited by 1 mM Zn(2+) ions. Also inhibited by pyridine-2,4-dicarboxylic acid, 5-hydroxyisophthalic acid and 5,5'-dithiobis(2-nitrobenzoic acid) (Ellman reagent). Contributes to the degradation of lignin at the level of the protocatechuate 4,5-cleavage pathway. Catalyzes the hydrolysis of 2-pyrone-4,6-dicarboxylate (PDC) to (4E)-oxalomesaconate (OMA). The keto form of OMA can tautomerize into the enol form, 4-carboxy-2-hydroxymuconate (CHM), under certain pH conditions. Also catalyzes the reverse reaction. Is essential for the growth of Sphingobium sp. SYK-6 on vanillate but is not responsible for the growth of this strain on syringate. The chain is 2-pyrone-4,6-dicarboxylate hydrolase from Sphingobium sp. (strain NBRC 103272 / SYK-6).